The primary structure comprises 142 residues: Transcriptional regulator MraZ (142 aa).

SpoVT-AbrB domains are found at residues 5–47 (EYNH…PMEE) and 76–119 (ANEI…SREK).

It belongs to the MraZ family. As to quaternary structure, forms oligomers.

It localises to the cytoplasm. The protein localises to the nucleoid. The sequence is that of Transcriptional regulator MraZ from Clostridium tetani (strain Massachusetts / E88).